The sequence spans 82 residues: Small ribosomal subunit protein bTHXm (82 aa).

A mitochondrion-targeting transit peptide spans 1–22 (MAMRLAAAAAFVRRLVPARNPV). The disordered stretch occupies residues 34–56 (RGDKKTKRGKRFKGSYGNARPKR). Residues 37 to 46 (KKTKRGKRFK) are compositionally biased toward basic residues.

Belongs to the bacterial ribosomal protein bTHX family.

It localises to the mitochondrion. The sequence is that of Small ribosomal subunit protein bTHXm from Oryza sativa subsp. japonica (Rice).